Reading from the N-terminus, the 389-residue chain is S-adenosylmethionine synthase (389 aa).

His17 contacts ATP. Residue Asp19 participates in Mg(2+) binding. Residue Glu45 participates in K(+) binding. L-methionine-binding residues include Glu58 and Gln101. Positions 101-111 are flexible loop; sequence QSPDISQGVTE. ATP-binding positions include 168-170, 234-235, Asp243, 249-250, Ala266, and Lys270; these read DSK, RF, and RK. L-methionine is bound at residue Asp243. Residue Lys274 participates in L-methionine binding.

This sequence belongs to the AdoMet synthase family. Homotetramer; dimer of dimers. Mg(2+) serves as cofactor. K(+) is required as a cofactor.

The protein resides in the cytoplasm. It catalyses the reaction L-methionine + ATP + H2O = S-adenosyl-L-methionine + phosphate + diphosphate. Its pathway is amino-acid biosynthesis; S-adenosyl-L-methionine biosynthesis; S-adenosyl-L-methionine from L-methionine: step 1/1. Its function is as follows. Catalyzes the formation of S-adenosylmethionine (AdoMet) from methionine and ATP. The overall synthetic reaction is composed of two sequential steps, AdoMet formation and the subsequent tripolyphosphate hydrolysis which occurs prior to release of AdoMet from the enzyme. The protein is S-adenosylmethionine synthase of Syntrophotalea carbinolica (strain DSM 2380 / NBRC 103641 / GraBd1) (Pelobacter carbinolicus).